Reading from the N-terminus, the 74-residue chain is Kappa-scoloptoxin(07)-Ssm2a (74 aa).

The signal sequence occupies residues 1 to 19 (MLVFYALLFVTVFSNTVMG). Residues 20 to 41 (ATIDKPIPKPILREAIEEIEVN) constitute a propeptide that is removed on maturation.

The protein belongs to the scoloptoxin-07 family. Contains 3 disulfide bonds. Expressed by the venom gland.

The protein localises to the secreted. Its function is as follows. Toxin that inhibits voltage-gated potassium channel currents in DRG neurons (IC(50)=about 570 nM). In vivo, induces neurotoxicity shown by twitching, paralysis, and body contraction. In vivo, insects injected with this toxin showed signs of neurotoxicity including twitching, paralysis, and body contraction. This Scolopendra mutilans (Chinese red-headed centipede) protein is Kappa-scoloptoxin(07)-Ssm2a.